Here is a 559-residue protein sequence, read N- to C-terminus: ATP-dependent RNA helicase HAS1 (559 aa).

The interval 1–90 (MAPRSQSKSQ…TSEAEADEPG (90 aa)) is disordered. Basic and acidic residues-rich tracts occupy residues 9–22 (SQRE…REDA) and 55–75 (PDQK…ELTK). The short motif at 93–121 (YSFEKADFSEPTMKAIKEMGFQKMTKVQA) is the Q motif element. The Helicase ATP-binding domain maps to 124-300 (IPPLLAGRDV…RISLRPGPLY (177 aa)). 137 to 144 (AKTGSGKT) lines the ATP pocket. The DEAD box motif lies at 247–250 (DEAD). In terms of domain architecture, Helicase C-terminal spans 314–484 (GLEQGYVVCD…NVQSQLTKLI (171 aa)).

This sequence belongs to the DEAD box helicase family. DDX18/HAS1 subfamily. In terms of assembly, associates in the nucleolus with the 60S and pre-60S ribosomal subunits.

It is found in the nucleus. The protein resides in the nucleolus. The enzyme catalyses ATP + H2O = ADP + phosphate + H(+). In terms of biological role, ATP-dependent RNA helicase involved in 40S ribosomal subunit biogenesis. Required for the processing and cleavage of 35S pre-rRNA at sites A0, A1, and A2, leading to mature 18S rRNA. The chain is ATP-dependent RNA helicase HAS1 (HAS1) from Lodderomyces elongisporus (strain ATCC 11503 / CBS 2605 / JCM 1781 / NBRC 1676 / NRRL YB-4239) (Yeast).